Reading from the N-terminus, the 109-residue chain is MEKSICTSVLVLGLFISSAIGQFCPRDRYEFPPIQCKTHADCGYRSFCEPSGTISRCCTKCPIGTIMVYPRCNWPSPGGCPPFSTCENDPVGLGRFAAVCCSRPYPFYG.

An N-terminal signal peptide occupies residues 1–21; that stretch reads MEKSICTSVLVLGLFISSAIG.

As to expression, prismatic layer of shell (at protein level). Expressed primarily in the mantle with highest level in the mantle edge and lower level in the mantle pallium.

It localises to the secreted. This is an uncharacterized protein from Margaritifera margaritifera (Freshwater pearl mussel).